Here is a 1010-residue protein sequence, read N- to C-terminus: Importin-8 (1010 aa).

One can recognise an Importin N-terminal domain in the interval 22-102 (AETELNQSYK…RDNIVEGIIR (81 aa)). The segment covering 886-895 (NHSKAEKVDI) has biased composition (basic and acidic residues). Residues 886 to 932 (NHSKAEKVDIEENEEISSEEEEETSVSAQAMQSQIGRSEEEDDDDWD) form a disordered region. The segment covering 896–909 (EENEEISSEEEEET) has biased composition (acidic residues). Serine 902 and serine 903 each carry phosphoserine. Positions 910 to 921 (SVSAQAMQSQIG) are enriched in polar residues.

This sequence belongs to the importin beta family. As to quaternary structure, forms a heterodimer with KPNB1. Interacts with SRP19. Interacts with RPL23A. Binds directly to nuclear pore complexes. Interacts with LRPPRC; the interaction occurs when LRPPRC is in its RNA-free form and promotes import of LRPPRC to the nucleus to allow for EIF4E-mediated export of mRNAS from the nucleus to the cytoplasm.

The protein resides in the cytoplasm. Its subcellular location is the nucleus. In terms of biological role, involved in nuclear protein import, either by acting as autonomous nuclear transport receptor or as an adapter-like protein in association with the importin-beta subunit KPNB1. Acting autonomously, may serve as receptor for nuclear localization signals (NLS) and promote translocation of import substrates through the nuclear pore complex (NPC) by an energy requiring, Ran-dependent mechanism. At the nucleoplasmic side of the NPC, Ran binds to importin, the importin/substrate complex dissociates and importin is re-exported from the nucleus to the cytoplasm where GTP hydrolysis releases Ran. The directionality of nuclear import is thought to be conferred by an asymmetric distribution of the GTP- and GDP-bound forms of Ran between the cytoplasm and nucleus. In vitro mediates the nuclear import of the signal recognition particle protein SRP19. May also be involved in cytoplasm-to-nucleus shuttling of a broad spectrum of other cargos, including Argonaute-microRNAs complexes, the JUN protein, RELA/NF-kappa-B p65 subunit, the translation initiation factor EIF4E and a set of receptor-activated mothers against decapentaplegic homolog (SMAD) transcription factors that play a critical role downstream of the large family of transforming growth factor beta and bone morphogenetic protein (BMP) cytokines. This is Importin-8 from Mus musculus (Mouse).